We begin with the raw amino-acid sequence, 690 residues long: Elongation factor G (690 aa).

The 276-residue stretch at Glu-8–Leu-283 folds into the tr-type G domain. GTP is bound by residues Ala-17–Thr-24, Asp-81–His-85, and Asn-135–Asp-138.

The protein belongs to the TRAFAC class translation factor GTPase superfamily. Classic translation factor GTPase family. EF-G/EF-2 subfamily.

It is found in the cytoplasm. Functionally, catalyzes the GTP-dependent ribosomal translocation step during translation elongation. During this step, the ribosome changes from the pre-translocational (PRE) to the post-translocational (POST) state as the newly formed A-site-bound peptidyl-tRNA and P-site-bound deacylated tRNA move to the P and E sites, respectively. Catalyzes the coordinated movement of the two tRNA molecules, the mRNA and conformational changes in the ribosome. This Nitrobacter hamburgensis (strain DSM 10229 / NCIMB 13809 / X14) protein is Elongation factor G.